A 715-amino-acid polypeptide reads, in one-letter code: ABC transporter F family member 3 (715 aa).

Position 2 is an N-acetylthreonine (T2). The disordered stretch occupies residues 96-118; that stretch reads VRMNDGMDDGPVKKKKPEPVDGP. ABC transporter domains lie at 175 to 436 and 504 to 713; these read IHMD…KNQQ and ISFS…LLQS. ATP-binding positions include 207–214 and 537–544; these read GRNGTGKT and GPNGIGKS.

Belongs to the ABC transporter superfamily. ABCF family. EF3 (TC 3.A.1.121) subfamily.

The protein is ABC transporter F family member 3 (ABCF3) of Arabidopsis thaliana (Mouse-ear cress).